A 962-amino-acid chain; its full sequence is Putative primase C962R (962 aa).

In terms of domain architecture, SF3 helicase spans 607–775 (ELDARLWIMF…PDPGNPYEKK (169 aa)). 636–643 (GGGCNGKT) lines the ATP pocket.

It belongs to the asfivirus helicase C962R family.

The sequence is that of Putative primase C962R from African swine fever virus (strain Badajoz 1971 Vero-adapted) (Ba71V).